A 459-amino-acid polypeptide reads, in one-letter code: Phosphomethylpyrimidine synthase (459 aa).

Substrate-binding positions include Asn80, Met109, Tyr139, His175, 195–197 (SRG), 236–239 (DSLR), and Glu275. His279 is a binding site for Zn(2+). Tyr302 is a substrate binding site. His343 is a Zn(2+) binding site. The [4Fe-4S] cluster site is built by Cys423, Cys426, and Cys431.

It belongs to the ThiC family. Requires [4Fe-4S] cluster as cofactor.

The catalysed reaction is 5-amino-1-(5-phospho-beta-D-ribosyl)imidazole + S-adenosyl-L-methionine = 4-amino-2-methyl-5-(phosphooxymethyl)pyrimidine + CO + 5'-deoxyadenosine + formate + L-methionine + 3 H(+). The protein operates within cofactor biosynthesis; thiamine diphosphate biosynthesis. In terms of biological role, catalyzes the synthesis of the hydroxymethylpyrimidine phosphate (HMP-P) moiety of thiamine from aminoimidazole ribotide (AIR) in a radical S-adenosyl-L-methionine (SAM)-dependent reaction. This chain is Phosphomethylpyrimidine synthase, found in Synechocystis sp. (strain ATCC 27184 / PCC 6803 / Kazusa).